A 283-amino-acid chain; its full sequence is Bifunctional protein FolD 2 (283 aa).

Residues 165–167, S190, and I231 each bind NADP(+); that span reads GAS.

This sequence belongs to the tetrahydrofolate dehydrogenase/cyclohydrolase family. In terms of assembly, homodimer.

The catalysed reaction is (6R)-5,10-methylene-5,6,7,8-tetrahydrofolate + NADP(+) = (6R)-5,10-methenyltetrahydrofolate + NADPH. The enzyme catalyses (6R)-5,10-methenyltetrahydrofolate + H2O = (6R)-10-formyltetrahydrofolate + H(+). The protein operates within one-carbon metabolism; tetrahydrofolate interconversion. In terms of biological role, catalyzes the oxidation of 5,10-methylenetetrahydrofolate to 5,10-methenyltetrahydrofolate and then the hydrolysis of 5,10-methenyltetrahydrofolate to 10-formyltetrahydrofolate. The chain is Bifunctional protein FolD 2 from Bordetella pertussis (strain Tohama I / ATCC BAA-589 / NCTC 13251).